The following is a 239-amino-acid chain: Ribosomal RNA small subunit methyltransferase G (239 aa).

S-adenosyl-L-methionine contacts are provided by residues glycine 78, phenylalanine 83, 129–130, and arginine 148; that span reads AE.

The protein belongs to the methyltransferase superfamily. RNA methyltransferase RsmG family.

It localises to the cytoplasm. In terms of biological role, specifically methylates the N7 position of a guanine in 16S rRNA. The polypeptide is Ribosomal RNA small subunit methyltransferase G (Clostridium botulinum (strain Okra / Type B1)).